Consider the following 937-residue polypeptide: Vacuolar membrane protease (937 aa).

At 1–16 the chain is on the cytoplasmic side; it reads PNGFVKFIRSIFGYRK. A helical membrane pass occupies residues 17–37; the sequence is TSLTLFVILTYVAVLLLAYLD. At 38-373 the chain is on the vacuolar side; it reads HSLYYSVDLP…FPTSQVVVAS (336 aa). Residues Asn106 and Asn140 are each glycosylated (N-linked (GlcNAc...) asparagine). Residues His154 and Asp166 each contribute to the Zn(2+) site. The active-site Proton acceptor is the Glu201. 3 residues coordinate Zn(2+): Glu202, Glu227, and His300. A helical transmembrane segment spans residues 374-394; it reads ILLLVLIPGISIPFLIIIFGY. Topologically, residues 395 to 407 are cytoplasmic; the sequence is KKNWELSFVNVTK. The chain crosses the membrane as a helical span at residues 408 to 428; it reads FPISLAISAALLNLFTNGFIV. Over 429–437 the chain is Vacuolar; sequence PFNQFLPNS. Residues 438–458 form a helical membrane-spanning segment; sequence SPFALVAILFATFLLLNYLIL. The Cytoplasmic segment spans residues 459 to 475; the sequence is NGINLIFVSYKIVNHDE. A helical membrane pass occupies residues 476–496; the sequence is KLISIIETSFLYWVVLIYSTA. Over 497–510 the chain is Vacuolar; sequence KLANNVIGDDHSGE. A helical transmembrane segment spans residues 511–531; it reads FPIIFLCALQAVASIFGLIGW. At 532 to 580 the chain is on the cytoplasmic side; sequence SFKPVPKEHYVVVPQEEAEPLLGSSDNFNYGSPDVEDDRLVSDGSYDWS. Residues 581–601 form a helical membrane-spanning segment; the sequence is IQFLTIVPISTYLIYNSGFLV. Topologically, residues 602–618 are vacuolar; sequence VDGINKSIQESLISQNL. The N-linked (GlcNAc...) asparagine glycan is linked to Asn606. The chain crosses the membrane as a helical span at residues 619–639; the sequence is IYKLLQTFAISLSIPLLPFIF. The Cytoplasmic segment spans residues 640–643; it reads KVNR. Residues 644-664 form a helical membrane-spanning segment; that stretch reads LFVLALFLISTIGVLFVATAD. Over 665 to 937 the chain is Vacuolar; sequence SFNVANPLKL…LVSVSKTVEL (273 aa). Residues Asn758, Asn870, and Asn887 are each glycosylated (N-linked (GlcNAc...) asparagine).

It belongs to the peptidase M28 family. The cofactor is Zn(2+).

The protein resides in the vacuole membrane. Functionally, may be involved in vacuolar sorting and osmoregulation. In Scheffersomyces stipitis (strain ATCC 58785 / CBS 6054 / NBRC 10063 / NRRL Y-11545) (Yeast), this protein is Vacuolar membrane protease.